A 297-amino-acid chain; its full sequence is SH2 domain-containing protein 6 (297 aa).

Disordered stretches follow at residues 1 to 61 (MSCP…FPTR) and 74 to 93 (MNPQ…RGTS). The span at 36-45 (PSKPPLPPPQ) shows a compositional bias: pro residues. The SH2 domain occupies 187-295 (WYSGNCDRQS…RGLTYLRFPT (109 aa)).

This is SH2 domain-containing protein 6 (Sh2d6) from Mus musculus (Mouse).